Consider the following 123-residue polypeptide: Holo-[acyl-carrier-protein] synthase (123 aa).

Aspartate 8 and glutamate 60 together coordinate Mg(2+).

The protein belongs to the P-Pant transferase superfamily. AcpS family. It depends on Mg(2+) as a cofactor.

The protein localises to the cytoplasm. It carries out the reaction apo-[ACP] + CoA = holo-[ACP] + adenosine 3',5'-bisphosphate + H(+). Functionally, transfers the 4'-phosphopantetheine moiety from coenzyme A to a Ser of acyl-carrier-protein. In Wolbachia pipientis wMel, this protein is Holo-[acyl-carrier-protein] synthase.